Reading from the N-terminus, the 165-residue chain is Calcium-binding protein H (165 aa).

EF-hand domains are found at residues 7–42 (QIEK…MGSK), 43–78 (YPEK…RYQD), 88–123 (YFQD…IGSD), and 124–159 (HPKE…TIRS). D20, D22, N24, E26, E31, D56, D58, E60, K62, E67, D101, N103, D105, R107, E112, D137, N139, D141, Y143, and E148 together coordinate Ca(2+).

The polypeptide is Calcium-binding protein H (cbpH) (Dictyostelium discoideum (Social amoeba)).